The sequence spans 641 residues: MLDDIRGPGDLQGLSKRELDLLADEIREFLIHKVAATGGHLGPNLGVVELSLALHRVFESPYDPIIFDTGHQAYVHKILTGRAGDFDTLRQKDGLSGYPSRAESEHDWVESSHASTALSYADGLAKAFELTGQRRRHVVAVVGDGAMTGGMCWEALNNIAAAEHRRIIIVVNDNGRSYAPTIGGLASHLAGLRLTPSYEKVLDESKKLLRGMPVVGPLAYALMHSLKVGVKDAVSPQVMFTDLGLKYVGPVDGHDEHAVEDALRRARGYGGPVIVHVITRKGMGYAPAEDDEAEQMHSTGIIDPKTGRAIKASAPGWTSVFSDALIDVASEHRNIVAITAAMPGPTGLSKFGERFPDRLFDVGIAEQHAVTSAAGLAMGGLHPVVAIYSTFLNRAFDQVMMDVALHRLPVTFVLDRAGITGSDGASHNGMWDLSILNVVPGMRVAAPRDASRLREELTEALAVDDGPTALRFPKGEVGEDIPAIERRDGVDILARPASGLHADVLLVAVGSFASTALATADRLGKQGIGVTVVDPRWVLPVPPHVVELAGQHRLVVTLEDSGVHGGAGSAVTAAMQDADVDIPSRDIGVPQQFLEHASRGQVLEELGLTDQHIARKITGWVAAMSREIGDSTVNPAAQQVD.

Thiamine diphosphate is bound by residues histidine 71 and 112–114; that span reads SHA. Aspartate 144 provides a ligand contact to Mg(2+). Thiamine diphosphate-binding positions include 145-146, asparagine 174, tyrosine 285, and glutamate 366; that span reads GA. Asparagine 174 provides a ligand contact to Mg(2+).

It belongs to the transketolase family. DXPS subfamily. In terms of assembly, homodimer. It depends on Mg(2+) as a cofactor. Thiamine diphosphate serves as cofactor.

It carries out the reaction D-glyceraldehyde 3-phosphate + pyruvate + H(+) = 1-deoxy-D-xylulose 5-phosphate + CO2. It functions in the pathway metabolic intermediate biosynthesis; 1-deoxy-D-xylulose 5-phosphate biosynthesis; 1-deoxy-D-xylulose 5-phosphate from D-glyceraldehyde 3-phosphate and pyruvate: step 1/1. In terms of biological role, catalyzes the acyloin condensation reaction between C atoms 2 and 3 of pyruvate and glyceraldehyde 3-phosphate to yield 1-deoxy-D-xylulose-5-phosphate (DXP). In Mycobacteroides abscessus (strain ATCC 19977 / DSM 44196 / CCUG 20993 / CIP 104536 / JCM 13569 / NCTC 13031 / TMC 1543 / L948) (Mycobacterium abscessus), this protein is 1-deoxy-D-xylulose-5-phosphate synthase.